The following is a 154-amino-acid chain: UPF0260 protein HI_1355 (154 aa).

This sequence belongs to the UPF0260 family.

This is UPF0260 protein HI_1355 from Haemophilus influenzae (strain ATCC 51907 / DSM 11121 / KW20 / Rd).